A 110-amino-acid chain; its full sequence is UPF0060 membrane protein Ajs_2087 (110 aa).

4 helical membrane passes run 7-27 (LALF…PWLW), 33-53 (SAWL…LLTL), 63-83 (AAYG…VDGV), and 86-106 (GPWD…IAFA).

It belongs to the UPF0060 family.

It localises to the cell inner membrane. In Acidovorax sp. (strain JS42), this protein is UPF0060 membrane protein Ajs_2087.